A 208-amino-acid polypeptide reads, in one-letter code: N-(5'-phosphoribosyl)anthranilate isomerase (208 aa).

This sequence belongs to the TrpF family.

It carries out the reaction N-(5-phospho-beta-D-ribosyl)anthranilate = 1-(2-carboxyphenylamino)-1-deoxy-D-ribulose 5-phosphate. It functions in the pathway amino-acid biosynthesis; L-tryptophan biosynthesis; L-tryptophan from chorismate: step 3/5. The sequence is that of N-(5'-phosphoribosyl)anthranilate isomerase from Neisseria meningitidis serogroup A / serotype 4A (strain DSM 15465 / Z2491).